The sequence spans 778 residues: Endonuclease MutS2 (778 aa).

328 to 335 (GPNTGGKT) contributes to the ATP binding site. The 76-residue stretch at 702 to 777 (LDLRGKRYEE…GSGATIVTFK (76 aa)) folds into the Smr domain.

The protein belongs to the DNA mismatch repair MutS family. MutS2 subfamily. As to quaternary structure, homodimer. Binds to stalled ribosomes, contacting rRNA.

Functionally, endonuclease that is involved in the suppression of homologous recombination and thus may have a key role in the control of bacterial genetic diversity. Acts as a ribosome collision sensor, splitting the ribosome into its 2 subunits. Detects stalled/collided 70S ribosomes which it binds and splits by an ATP-hydrolysis driven conformational change. Acts upstream of the ribosome quality control system (RQC), a ribosome-associated complex that mediates the extraction of incompletely synthesized nascent chains from stalled ribosomes and their subsequent degradation. Probably generates substrates for RQC. This Streptococcus pneumoniae serotype 2 (strain D39 / NCTC 7466) protein is Endonuclease MutS2.